The sequence spans 1205 residues: Nitric oxide synthase 3 (1205 aa).

Residues Met-1–Val-73 are disordered. Gly-2 carries the N-myristoyl glycine lipid modification. Residues Cys-15 and Cys-26 are each lipidated (S-palmitoyl cysteine). The segment covering Cys-15–Gly-27 has biased composition (gly residues). Positions Ser-33–Pro-47 are enriched in pro residues. 2 residues coordinate Zn(2+): Cys-96 and Cys-101. Residues Cys-100–Lys-488 form an interaction with NOSIP region. Ser-104 lines the (6R)-L-erythro-5,6,7,8-tetrahydrobiopterin pocket. Ser-116 carries the phosphoserine; by CDK5 modification. Cys-186 contributes to the heme b binding site. L-arginine-binding residues include Gln-249, Trp-358, Tyr-359, Glu-363, and Asn-368. Positions 448, 449, and 462 each coordinate (6R)-L-erythro-5,6,7,8-tetrahydrobiopterin. Tyr-477 is a heme b binding site. Positions Ile-492 to Met-512 are calmodulin-binding. At Thr-497 the chain carries Phosphothreonine; by AMPK and PKA. The region spanning Ala-522–Phe-705 is the Flavodoxin-like domain. The FMN site is built by Ser-528, Glu-529, Thr-530, Arg-532, Ser-574, and Thr-575. Ser-617, Ser-635, and Ser-640 each carry phosphoserine. Positions 656, 663, 689, and 693 each coordinate FMN. The 247-residue stretch at Arg-758–Pro-1004 folds into the FAD-binding FR-type domain. Arg-778 provides a ligand contact to NADP(+). His-800 contacts FAD. The segment at Glu-820–Val-847 is disordered. Ser-838 is subject to Phosphoserine. Arg-940, Tyr-942, Ser-943, Thr-958, Ala-960, Tyr-964, Val-977, Cys-978, and Ser-979 together coordinate FAD. Residues Thr-1018, Arg-1051, Ser-1080, Arg-1081, Lys-1087, Tyr-1089, and Gln-1091 each coordinate NADP(+). Thr-1177 is modified (phosphothreonine). Phosphoserine; by AMPK, PDPK1 and PKA is present on Ser-1179. The residue at position 1181 (Ser-1181) is a Phosphoserine.

This sequence belongs to the NOS family. As to quaternary structure, homodimer. Interacts with NOSIP and NOSTRIN. Interacts with HSP90AB1. Forms a complex with ASL, ASS1 and SLC7A1; the complex regulates cell-autonomous L-arginine synthesis and citrulline recycling while channeling extracellular L-arginine to nitric oxide synthesis pathway. The cofactor is heme b. FAD is required as a cofactor. It depends on FMN as a cofactor. Requires (6R)-L-erythro-5,6,7,8-tetrahydrobiopterin as cofactor. In terms of processing, phosphorylation by AMPK at Ser-1179 in the presence of Ca(2+)-calmodulin (CaM) activates activity. In absence of Ca(2+)-calmodulin, AMPK also phosphorylates Thr-497, resulting in inhibition of activity. Phosphorylation of Ser-116 by CDK5 reduces activity.

It is found in the cell membrane. The protein resides in the membrane. Its subcellular location is the caveola. The protein localises to the cytoplasm. It localises to the cytoskeleton. It is found in the golgi apparatus. The enzyme catalyses 2 L-arginine + 3 NADPH + 4 O2 + H(+) = 2 L-citrulline + 2 nitric oxide + 3 NADP(+) + 4 H2O. With respect to regulation, stimulated by calcium/calmodulin. Inhibited by NOSIP and NOSTRIN. Produces nitric oxide (NO) which is implicated in vascular smooth muscle relaxation through a cGMP-mediated signal transduction pathway. NO mediates vascular endothelial growth factor (VEGF)-induced angiogenesis in coronary vessels and promotes blood clotting through the activation of platelets. This Bos taurus (Bovine) protein is Nitric oxide synthase 3 (NOS3).